Consider the following 459-residue polypeptide: Trigger factor (459 aa).

The region spanning 166–245 (GDFANIDLTA…VNSVKAEELP (80 aa)) is the PPIase FKBP-type domain.

Belongs to the FKBP-type PPIase family. Tig subfamily.

Its subcellular location is the cytoplasm. It carries out the reaction [protein]-peptidylproline (omega=180) = [protein]-peptidylproline (omega=0). Functionally, involved in protein export. Acts as a chaperone by maintaining the newly synthesized protein in an open conformation. Functions as a peptidyl-prolyl cis-trans isomerase. This chain is Trigger factor, found in Bifidobacterium longum (strain NCC 2705).